The primary structure comprises 74 residues: Translation initiation factor IF-1 (74 aa).

The region spanning 1-72 is the S1-like domain; it reads MGKEDVIRME…TRGRIVYRKK (72 aa).

Belongs to the IF-1 family. In terms of assembly, component of the 30S ribosomal translation pre-initiation complex which assembles on the 30S ribosome in the order IF-2 and IF-3, IF-1 and N-formylmethionyl-tRNA(fMet); mRNA recruitment can occur at any time during PIC assembly.

It is found in the cytoplasm. One of the essential components for the initiation of protein synthesis. Stabilizes the binding of IF-2 and IF-3 on the 30S subunit to which N-formylmethionyl-tRNA(fMet) subsequently binds. Helps modulate mRNA selection, yielding the 30S pre-initiation complex (PIC). Upon addition of the 50S ribosomal subunit IF-1, IF-2 and IF-3 are released leaving the mature 70S translation initiation complex. The polypeptide is Translation initiation factor IF-1 (Thermotoga petrophila (strain ATCC BAA-488 / DSM 13995 / JCM 10881 / RKU-1)).